The following is a 332-amino-acid chain: RNA polymerase principal sigma factor HrdD (332 aa).

Positions 1–11 (MATRAVARRKS) are enriched in basic residues. The interval 1–25 (MATRAVARRKSAAGETSGSATSVRA) is disordered. Residues 13-22 (AGETSGSATS) are compositionally biased toward low complexity. A Polymerase core binding motif is present at residues 124 to 137 (DLIQEGNAGLVRAV). The H-T-H motif DNA-binding region spans 294 to 313 (LTEVGKEHGLTRERIRQIEK).

Belongs to the sigma-70 factor family. As to quaternary structure, interacts transiently with the RNA polymerase catalytic core.

Functionally, sigma factors are initiation factors that promote the attachment of RNA polymerase to specific initiation sites and are then released. The chain is RNA polymerase principal sigma factor HrdD (hrdD) from Streptomyces coelicolor (strain ATCC BAA-471 / A3(2) / M145).